A 154-amino-acid polypeptide reads, in one-letter code: Protein X (154 aa).

A mitochondrial targeting sequence region spans residues Pro-68–Phe-117.

The protein belongs to the orthohepadnavirus protein X family. In terms of assembly, may form homodimer. May interact with host CEBPA, CFLAR, CREB1, DDB1, E4F1, HBXIP, HSPD1/HSP60, NFKBIA, POLR2E and SMAD4. Interacts with host SMC5-SMC6 complex and induces its degradation. Interacts with host TRPC4AP; leading to prevent ubiquitination of TRPC4AP. Interacts with host PLSCR1; this interaction promotes ubiquitination and degradation of HBx and impairs HBx-mediated cell proliferation. In terms of processing, a fraction may be phosphorylated in insect cells and HepG2 cells, a human hepatoblastoma cell line. Phosphorylated in vitro by host protein kinase C or mitogen-activated protein kinase. N-acetylated in insect cells.

The protein localises to the host cytoplasm. Its subcellular location is the host nucleus. The protein resides in the host mitochondrion. In terms of biological role, multifunctional protein that plays a role in silencing host antiviral defenses and promoting viral transcription. Does not seem to be essential for HBV infection. May be directly involved in development of cirrhosis and liver cancer (hepatocellular carcinoma). Most of cytosolic activities involve modulation of cytosolic calcium. The effect on apoptosis is controversial depending on the cell types in which the studies have been conducted. May induce apoptosis by localizing in mitochondria and causing loss of mitochondrial membrane potential. May also modulate apoptosis by binding host CFLAR, a key regulator of the death-inducing signaling complex (DISC). Promotes viral transcription by using the host E3 ubiquitin ligase DDB1 to target the SMC5-SMC6 complex to proteasomal degradation. This host complex would otherwise bind to viral episomal DNA, and prevents its transcription. Moderately stimulates transcription of many different viral and cellular transcription elements. Promoters and enhancers stimulated by HBx contain DNA binding sites for NF-kappa-B, AP-1, AP-2, c-EBP, ATF/CREB, or the calcium-activated factor NF-AT. This chain is Protein X, found in Homo sapiens (Human).